A 1226-amino-acid polypeptide reads, in one-letter code: 3-hydroxy-3-methylglutaryl-coenzyme A reductase (1226 aa).

5 helical membrane passes run 17-37 (IETI…ILSG), 224-244 (ILVV…LFLA), 252-272 (FWLS…TLPM), 337-357 (VGNM…VGVN), and 373-393 (LLAM…TIMV). Residues 223–391 (DILVVLTGYI…FTLYTAVLTI (169 aa)) form the SSD domain. A disordered region spans residues 428 to 449 (LSRKSSKQSVTEPETTKNLRQR). The span at 434–445 (KQSVTEPETTKN) shows a compositional bias: polar residues. A helical transmembrane segment spans residues 481-501 (LLLIASFLTLHILNFCTTLTS). Disordered stretches follow at residues 683-702 (APAP…PPPL) and 722-742 (LPIR…EVEP). Residues 685-702 (APAPAPEPEPPVNRPPPL) show a composition bias toward pro residues. Residue Glu869 is the Charge relay system of the active site. Residue 875–881 (STSRGCK) coordinates CoA. NADP(+) is bound by residues 936–938 (SRF) and 963–971 (DAMGMNMIS). The active-site Charge relay system is Lys1001. 1030-1032 (VLK) is a binding site for CoA. The active-site Charge relay system is Asp1077. The helical transmembrane segment at 1150–1170 (IIASAVMAGELSLISALAAGH) threads the bilayer. 1174 to 1175 (AH) lines the CoA pocket. Catalysis depends on His1175, which acts as the Proton donor. 1179-1180 (NR) contacts NADP(+). Residues 1182-1226 (QLNTPMPSRPHTPGPEDVSHVQQLPTPSASDDKGVTAQGYVVEAK) are disordered. Polar residues predominate over residues 1201-1210 (HVQQLPTPSA).

Belongs to the HMG-CoA reductase family.

Its subcellular location is the endoplasmic reticulum membrane. It catalyses the reaction (R)-mevalonate + 2 NADP(+) + CoA = (3S)-3-hydroxy-3-methylglutaryl-CoA + 2 NADPH + 2 H(+). Its pathway is metabolic intermediate biosynthesis; (R)-mevalonate biosynthesis; (R)-mevalonate from acetyl-CoA: step 3/3. Functionally, HMG-CoA reductase; part of the first module of ergosterol biosynthesis pathway that includes the early steps of the pathway, conserved across all eukaryotes, and which results in the formation of mevalonate from acetyl-coenzyme A (acetyl-CoA). This module also plays a key role in the biosynthesis of triterpenes such as ganoderic acids (GA), a group of highly oxygenated lanostane-type triterpenoids which are well recognized as a main group of unique bioactive compounds in the medicinal mushroom Ganoderma lucidum. In this module, the acetyl-CoA acetyltransferase catalyzes the formation of acetoacetyl-CoA. The hydroxymethylglutaryl-CoA synthase HMGS then condenses acetyl-CoA with acetoacetyl-CoA to form HMG-CoA. The rate-limiting step of the early module is the reduction to mevalonate by the 3-hydroxy-3-methylglutaryl-coenzyme A (HMG-CoA) reductase. The sequence is that of 3-hydroxy-3-methylglutaryl-coenzyme A reductase from Ganoderma lucidum (Ling zhi medicinal fungus).